A 571-amino-acid chain; its full sequence is Methionine--tRNA ligase (571 aa).

The 'HIGH' region signature appears at 10–20 (PYVNAVPHLGN). The Zn(2+) site is built by Cys143, Cys146, Cys156, and Cys159. A 'KMSKS' region motif is present at residues 333-337 (KFSKS). Lys336 is an ATP binding site.

Belongs to the class-I aminoacyl-tRNA synthetase family. MetG type 1 subfamily. Requires Zn(2+) as cofactor.

Its subcellular location is the cytoplasm. It catalyses the reaction tRNA(Met) + L-methionine + ATP = L-methionyl-tRNA(Met) + AMP + diphosphate. Its function is as follows. Is required not only for elongation of protein synthesis but also for the initiation of all mRNA translation through initiator tRNA(fMet) aminoacylation. In Sulfurisphaera tokodaii (strain DSM 16993 / JCM 10545 / NBRC 100140 / 7) (Sulfolobus tokodaii), this protein is Methionine--tRNA ligase.